The primary structure comprises 75 residues: MPQKSRYSDEQVEQLLAELVSVLEKHHTPTDLSLMVLGNMVTNLINTSIAPAQRMLIADSFVHALRASIDEGNIH.

Belongs to the UPF0352 family.

The chain is UPF0352 protein PMI0824 from Proteus mirabilis (strain HI4320).